A 62-amino-acid polypeptide reads, in one-letter code: Large ribosomal subunit protein uL29 (62 aa).

It belongs to the universal ribosomal protein uL29 family.

In Trichlorobacter lovleyi (strain ATCC BAA-1151 / DSM 17278 / SZ) (Geobacter lovleyi), this protein is Large ribosomal subunit protein uL29.